We begin with the raw amino-acid sequence, 470 residues long: Putative multidrug resistance protein MdtD (470 aa).

The Periplasmic segment spans residues 1–11 (MTELPDNTRWQ). A helical transmembrane segment spans residues 12-32 (LWIVAFGFFMQSLDTTIVNTA). The Cytoplasmic segment spans residues 33–48 (LPSMAKSLGESPLHMH). Residues 49–69 (MVVVSYVLTVAVMLPASGWLA) form a helical membrane-spanning segment. Topologically, residues 70–76 (DKIGVRN) are periplasmic. The chain crosses the membrane as a helical span at residues 77–97 (IFFAAIVLFTLGSLFCALSGT). Topologically, residues 98–101 (LNQL) are cytoplasmic. The helical transmembrane segment at 102 to 124 (VLARVLQGVGGAMMVPVGRLTVM) threads the bilayer. Over 125–137 (KIVPRTQYMAAMT) the chain is Periplasmic. Residues 138–158 (FVTLPGQIGPLLGPALGGVLV) traverse the membrane as a helical segment. At 159–164 (EYASWH) the chain is on the cytoplasmic side. A helical membrane pass occupies residues 165-185 (WIFLINIPVGIVGAMATFMLM). The Periplasmic portion of the chain corresponds to 186-196 (PNYTIETRRFD). A helical transmembrane segment spans residues 197–217 (LPGFLLLAIGMAVLTLALDGS). The Cytoplasmic segment spans residues 218–224 (KSMGISP). The chain crosses the membrane as a helical span at residues 225–245 (WTLAGLAAGGAAAILLYLFHA). The Periplasmic portion of the chain corresponds to 246-262 (KKNSGALFSLRLFRTPT). Residues 263-283 (FSLGLLGSFAGRIGSGMLPFM) form a helical membrane-spanning segment. The Cytoplasmic segment spans residues 284 to 285 (TP). A helical membrane pass occupies residues 286 to 306 (VFLQIGLGFSPFHAGLMMIPM). Topologically, residues 307 to 341 (VLGSMGMKRIVVQIVNRFGYRRVLVATTLGLALVS) are periplasmic. The chain crosses the membrane as a helical span at residues 342–362 (LLFMSVALLGWYYLLPLVLLL). Residues 363–395 (QGMVNSARFSSMNTLTLKDLPDTLASSGNSLLS) are Cytoplasmic-facing. A helical membrane pass occupies residues 396 to 416 (MIMQLSMSIGVTIAGMLLGMF). Residues 417 to 430 (GQQHIGIDSSATHH) lie on the Periplasmic side of the membrane. The helical transmembrane segment at 431–451 (VFMYTWLCMAVIIALPAIIFA) threads the bilayer. Topologically, residues 452–470 (RVPNDTQQNMVISRRKRSL) are cytoplasmic.

It belongs to the major facilitator superfamily. TCR/Tet family.

The protein localises to the cell inner membrane. In Salmonella dublin (strain CT_02021853), this protein is Putative multidrug resistance protein MdtD.